The chain runs to 266 residues: Undecaprenyl-diphosphatase (266 aa).

8 consecutive transmembrane segments (helical) span residues Met-1–Ile-21, Gln-39–Phe-59, Trp-87–Ile-107, Phe-111–Ala-131, Val-144–Thr-164, Ala-183–Val-203, Ala-218–Leu-238, and Met-246–Leu-266.

Belongs to the UppP family.

Its subcellular location is the cell inner membrane. The catalysed reaction is di-trans,octa-cis-undecaprenyl diphosphate + H2O = di-trans,octa-cis-undecaprenyl phosphate + phosphate + H(+). Catalyzes the dephosphorylation of undecaprenyl diphosphate (UPP). Confers resistance to bacitracin. The protein is Undecaprenyl-diphosphatase of Shewanella halifaxensis (strain HAW-EB4).